The chain runs to 548 residues: Poly(ADP-ribose) glycohydrolase 1 (548 aa).

It belongs to the poly(ADP-ribose) glycohydrolase family.

It catalyses the reaction [(1''-&gt;2')-ADP-alpha-D-ribose](n) + H2O = [(1''-&gt;2')-ADP-alpha-D-ribose](n-1) + ADP-D-ribose. Functionally, poly(ADP-ribose) synthesized after DNA damage is only present transiently and is rapidly degraded by poly(ADP-ribose) glycohydrolase. Involved in establishing period length of the circadian oscillator. May regulate post-translational poly(ADP-ribosyl)ation of an oscillator component. This is Poly(ADP-ribose) glycohydrolase 1 (PARG1) from Arabidopsis thaliana (Mouse-ear cress).